The sequence spans 299 residues: Acetylglutamate kinase (299 aa).

Residues 70–71 (GG), Arg92, and Asn197 contribute to the substrate site.

It belongs to the acetylglutamate kinase family. ArgB subfamily.

It localises to the cytoplasm. The catalysed reaction is N-acetyl-L-glutamate + ATP = N-acetyl-L-glutamyl 5-phosphate + ADP. It functions in the pathway amino-acid biosynthesis; L-arginine biosynthesis; N(2)-acetyl-L-ornithine from L-glutamate: step 2/4. Catalyzes the ATP-dependent phosphorylation of N-acetyl-L-glutamate. This Acidiphilium cryptum (strain JF-5) protein is Acetylglutamate kinase.